Consider the following 1303-residue polypeptide: Zinc finger CCCH domain-containing protein 4 (1303 aa).

The segment covering 1–33 has biased composition (pro residues); sequence MEAAPGTPPPPPSESPPPPSPPPPSTPSPPPCS. The disordered stretch occupies residues 1–388; the sequence is MEAAPGTPPP…RDHDKPHQQS (388 aa). Positions 53–73 are enriched in acidic residues; that stretch reads DREDGELEEGELEDDGAEETQ. Phosphothreonine occurs at positions 72 and 75. Phosphoserine is present on residues Ser76, Ser92, and Ser94. Over residues 80-99 the composition is skewed to basic and acidic residues; the sequence is ERSRKEKGEKHHSDSDEEKS. Residues 95-128 are a coiled coil; the sequence is DEEKSHRRLKRKRKKEREKEKRRSKKRRKSKHKR. A compositionally biased stretch (basic residues) spans 100–130; sequence HRRLKRKRKKEREKEKRRSKKRRKSKHKRHA. The segment covering 135–144 has biased composition (acidic residues); that stretch reads DFSDFSDDSD. Residue Tyr155 is modified to Phosphotyrosine. Positions 194–218 are enriched in acidic residues; the sequence is EDYENEQYGEYEGDEEEDMGKEDYD. Basic and acidic residues predominate over residues 219-235; sequence DFTKELNQYRRAKEGSS. A compositionally biased stretch (basic residues) spans 238–251; it reads RGSRGRGRGYRGRG. Residues 252-274 are compositionally biased toward gly residues; that stretch reads SRGGSRGRGMGRGSRGRGRGSMG. Residues 278–304 show a composition bias toward acidic residues; the sequence is PEDEEDFYEEEMDYGESEEPMGDDDYD. Over residues 305–321 the composition is skewed to basic and acidic residues; the sequence is EYSKELNQYRRSKDSRG. Residues 323–346 show a composition bias toward basic residues; that stretch reads GLSRGRGRGSRGRGKGMGRGRGRG. The segment covering 358–369 has biased composition (acidic residues); that stretch reads NDDEDFYDEDMG. Residues 377–388 are compositionally biased toward basic and acidic residues; it reads RSRDHDKPHQQS. 3 consecutive C3H1-type zinc fingers follow at residues 390 to 417, 419 to 446, and 447 to 470; these read KKGK…HDIE, PKKR…HGDF, and PCKL…HDPL. A compositionally biased stretch (acidic residues) spans 486–496; it reads AEAGAEDEKEV. The tract at residues 486 to 571 is disordered; it reads AEAGAEDEKE…HEPLSPQQLQ (86 aa). 2 stretches are compositionally biased toward pro residues: residues 507 to 529 and 539 to 558; these read LPKP…PQAP and GGPP…PQMP. An Asymmetric dimethylarginine modification is found at Arg601. Residues 605 to 624 are compositionally biased toward pro residues; it reads PGGPPGPMGPGPNMGPPGPM. Disordered stretches follow at residues 605-685, 710-955, and 996-1288; these read PGGP…SGMM, GLLG…PRSQ, and PPVP…ASLK. Over residues 630–650 the composition is skewed to basic and acidic residues; it reads PDMHPDMHPDMHPDMHADMHA. The segment covering 659 to 673 has biased composition (pro residues); the sequence is NPGPPMGPGGPPMMP. Composition is skewed to basic and acidic residues over residues 717-739 and 782-795; these read DYGH…HPLE and ERAR…KQDR. A coiled-coil region spans residues 767-800; the sequence is RALYLRIQQKQQEEEERARRLAESSKQDRENEEG. Residues Ser807 and Ser808 each carry the phosphoserine modification. Positions 815 to 843 are enriched in polar residues; sequence SSVTSILKTLRQQTSSRPPASVGELSSSG. Residues 860–875 are compositionally biased toward basic and acidic residues; sequence ADPRLSRDPRLTRHVE. 3 positions are modified to phosphoserine: Ser904, Ser907, and Ser908. A compositionally biased stretch (low complexity) spans 904–918; the sequence is SLHSSPVGPSSSKGS. Composition is skewed to polar residues over residues 1028–1038 and 1053–1062; these read GASTDSSTQGA and VNATGSSAAP. Basic and acidic residues predominate over residues 1067–1084; sequence KPSDPRVRKAPTDPRLQK. Low complexity predominate over residues 1097–1110; the sequence is PGPAEAPSPTASPS. A Phosphoserine modification is found at Ser1104. At Thr1106 the chain carries Phosphothreonine. Phosphoserine is present on residues Ser1108, Ser1110, and Ser1114. The residue at position 1118 (Thr1118) is a Phosphothreonine. Residues 1129-1139 are compositionally biased toward gly residues; that stretch reads GGLGQGGGGGQ. Residues 1224 to 1234 show a composition bias toward low complexity; that stretch reads KAAAAPAATTA. Positions 1235–1245 are enriched in pro residues; the sequence is TPPPEGAPPQP. A compositionally biased stretch (polar residues) spans 1259–1268; it reads VKQTPKTGSG. Residues Ser1269 and Ser1275 each carry the phosphoserine modification.

Belongs to the suppressor of sable family. As to quaternary structure, interacts with WDR82.

Its subcellular location is the chromosome. Its function is as follows. RNA-binding protein that suppresses transcription of long non-coding RNAs (lncRNAs). LncRNAs are defined as transcripts more than 200 nucleotides that are not translated into protein. Together with WDR82, part of a transcription termination checkpoint that promotes transcription termination of lncRNAs and their subsequent degradation by the exosome. The transcription termination checkpoint is activated by the inefficiently spliced first exon of lncRNAs. In Homo sapiens (Human), this protein is Zinc finger CCCH domain-containing protein 4.